Consider the following 148-residue polypeptide: Large ribosomal subunit protein bL9 (148 aa).

This sequence belongs to the bacterial ribosomal protein bL9 family.

Binds to the 23S rRNA. The sequence is that of Large ribosomal subunit protein bL9 from Clostridium perfringens (strain ATCC 13124 / DSM 756 / JCM 1290 / NCIMB 6125 / NCTC 8237 / Type A).